The primary structure comprises 599 residues: Elongation factor 4 (599 aa).

In terms of domain architecture, tr-type G spans 4 to 186 (KYIRNFSIIA…AIVEKVPPPK (183 aa)). GTP-binding positions include 16–21 (DHGKST) and 133–136 (NKID).

Belongs to the TRAFAC class translation factor GTPase superfamily. Classic translation factor GTPase family. LepA subfamily.

Its subcellular location is the cell inner membrane. The enzyme catalyses GTP + H2O = GDP + phosphate + H(+). Required for accurate and efficient protein synthesis under certain stress conditions. May act as a fidelity factor of the translation reaction, by catalyzing a one-codon backward translocation of tRNAs on improperly translocated ribosomes. Back-translocation proceeds from a post-translocation (POST) complex to a pre-translocation (PRE) complex, thus giving elongation factor G a second chance to translocate the tRNAs correctly. Binds to ribosomes in a GTP-dependent manner. The chain is Elongation factor 4 from Bdellovibrio bacteriovorus (strain ATCC 15356 / DSM 50701 / NCIMB 9529 / HD100).